The chain runs to 171 residues: Orotate phosphoribosyltransferase (171 aa).

Residues R85, K86, R88, H90, and 110–118 contribute to the 5-phospho-alpha-D-ribose 1-diphosphate site; that span reads EDVVTTGNS. Orotate is bound by residues T114 and R142.

It belongs to the purine/pyrimidine phosphoribosyltransferase family. PyrE subfamily. Homodimer. Mg(2+) serves as cofactor.

The enzyme catalyses orotidine 5'-phosphate + diphosphate = orotate + 5-phospho-alpha-D-ribose 1-diphosphate. The protein operates within pyrimidine metabolism; UMP biosynthesis via de novo pathway; UMP from orotate: step 1/2. Functionally, catalyzes the transfer of a ribosyl phosphate group from 5-phosphoribose 1-diphosphate to orotate, leading to the formation of orotidine monophosphate (OMP). In Thermoplasma acidophilum (strain ATCC 25905 / DSM 1728 / JCM 9062 / NBRC 15155 / AMRC-C165), this protein is Orotate phosphoribosyltransferase.